The sequence spans 407 residues: Peptidase T (407 aa).

Histidine 82 contributes to the Zn(2+) binding site. The active site involves aspartate 84. Aspartate 143 serves as a coordination point for Zn(2+). Glutamate 177 serves as the catalytic Proton acceptor. The Zn(2+) site is built by glutamate 178, aspartate 200, and histidine 382.

This sequence belongs to the peptidase M20B family. The cofactor is Zn(2+).

The protein localises to the cytoplasm. It carries out the reaction Release of the N-terminal residue from a tripeptide.. Cleaves the N-terminal amino acid of tripeptides. The protein is Peptidase T of Streptococcus pyogenes serotype M28 (strain MGAS6180).